We begin with the raw amino-acid sequence, 202 residues long: STEFQRYMEIVIVVDHSMVKKYNGDSPKIKAWVYEMINTITEGYRDLYIDIILSGLEIWSEKDLINVEASAGNTLKSFGEWRAKDLIHRISHDNAQLLTATDFDGPTIGLAYVASMCEPKLSVGVIQDHSSVNRLVAITLAHEMAHNLGVRHDEKDCVGVVYLCIMRIPVVEDKRSYFSDCSYIQCREYISKENPPCILNKP.

In terms of domain architecture, Peptidase M12B spans R6 to P202. Ca(2+) is bound by residues E9 and D93. Intrachain disulfides connect C117-C197 and C157-C181. H142 is a binding site for Zn(2+). E143 is an active-site residue. The Zn(2+) site is built by H146 and H152. Residues C197 and N200 each coordinate Ca(2+).

It belongs to the venom metalloproteinase (M12B) family. P-I subfamily. As to quaternary structure, monomer. The cofactor is Zn(2+). Expressed by the venom gland.

It is found in the secreted. Snake venom metalloproteinase that impairs hemostasis in the envenomed animal. This is Snake venom metalloproteinase Ac1 from Deinagkistrodon acutus (Hundred-pace snake).